Here is a 249-residue protein sequence, read N- to C-terminus: Methyltransferase 1 (249 aa).

The protein belongs to the FkbM methyltransferase family.

Its pathway is secondary metabolite biosynthesis. In terms of biological role, methyltransferase; part of the pathway that mediates the biosynthesis of tenellin-type 2-pyridones, iron-chelating compounds involved in iron stress tolerance, competition with the natural competitor fungus Metarhizium robertsii and insect hosts infection. Methylates pyridovericin-N-O-(beta-D-glucopyranoside) produced by the UDP-glucosyltransferase GT1 to yield pyridovericin-N-O-(4-O-methyl-beta-D-glucopyranoside) (PMGP). The pathway begins with the assembly of the polyketide-amino acid backbone by the hybrid PKS-NRPS tenS with the help of the enoyl reductase tenC. These enzymes catalyze the synthesis of the pyrrolidine-2-dione intermediates pretellinin A, 11-hydropretellenin A, 12-hydropretellenin A, 13-hydropretellenin A, 14-hydropretellenin A, 12-oxopretellenin A and prototellinin D. The cytochrome P450 monooxygenase tenA then catalyzes an oxidative ring expansion of pretenellin A and 14-hydropretellenin A to form the 2-pyridone core, leading to pretenellin B and pyridovericin, respectively. The cytochrome P450 monooxygenase tenB is then required for the selective N-hydroxylation of the 2-pyridone nitrogen of yield tellinin and 15-hydroxytellenin (15-HT), respectively. The UDP-glucosyltransferase GT1 and the methyltransferase MT1, located outside the tenS gene cluster, contribute to the stepwise glycosylation and methylation of 15-HT to obtain the glycoside pyridovericin-N-O-(4-O-methyl-beta-D-glucopyranoside) (PMGP). Additional related compounds such as 1-O-methyl-15-HT, (8Z)-1-O-methyl-15-HT, and O-methyltenellin A are also produced but the enzymes involved in their biosynthesis have still to be determined. The polypeptide is Methyltransferase 1 (Beauveria bassiana (strain ARSEF 2860) (White muscardine disease fungus)).